The primary structure comprises 60 residues: Metallothionein (60 aa).

A beta region spans residues 1-28 (MDPCECSKTGKCSCGGSCTCTNCSCTSC). The a divalent metal cation site is built by cysteine 4, cysteine 6, cysteine 12, cysteine 14, cysteine 18, cysteine 20, cysteine 23, cysteine 25, cysteine 28, cysteine 32, cysteine 33, cysteine 35, cysteine 36, cysteine 40, cysteine 43, cysteine 47, cysteine 49, cysteine 54, cysteine 58, and cysteine 59. Residues 29-60 (KKSCCPCCPSGCSKCASGCVCKGKTCDTSCCQ) are alpha.

It belongs to the metallothionein superfamily. Type 1 family.

Metallothioneins have a high content of cysteine residues that bind various heavy metals. The protein is Metallothionein (mt) of Chelon auratus (Golden grey mullet).